Consider the following 219-residue polypeptide: MAAHGQGFDGVERRGLMFVLSSPSGAGKTTLSRLLIERVEGLSLSVSATTRPMRPGEVDGRDYRFVDKATFAVMVKCDELLEWATVFDNRYGTPRAPVEAALSSGRDVLFDIDWQGTQQLREKARADVVSVFILPPSATDLERRLHTRAQDSDEVIRGRMDRAAHELSHWAEYDYIVINQDIDEAFAEVQSILKAERLKRERRTGLTAFVRELQRQLEN.

Residues 15-194 (GLMFVLSSPS…AFAEVQSILK (180 aa)) form the Guanylate kinase-like domain. 22–29 (SPSGAGKT) lines the ATP pocket.

The protein belongs to the guanylate kinase family.

The protein resides in the cytoplasm. The enzyme catalyses GMP + ATP = GDP + ADP. Its function is as follows. Essential for recycling GMP and indirectly, cGMP. This is Guanylate kinase from Nitrobacter hamburgensis (strain DSM 10229 / NCIMB 13809 / X14).